The sequence spans 392 residues: Ribosomal RNA large subunit methyltransferase G (392 aa).

This sequence belongs to the methyltransferase superfamily. RlmG family.

The protein resides in the cytoplasm. It carries out the reaction guanosine(1835) in 23S rRNA + S-adenosyl-L-methionine = N(2)-methylguanosine(1835) in 23S rRNA + S-adenosyl-L-homocysteine + H(+). Specifically methylates the guanine in position 1835 (m2G1835) of 23S rRNA. This chain is Ribosomal RNA large subunit methyltransferase G, found in Colwellia psychrerythraea (strain 34H / ATCC BAA-681) (Vibrio psychroerythus).